The following is a 950-amino-acid chain: Translation initiation factor IF-2 (950 aa).

Basic and acidic residues-rich tracts occupy residues 128-158 (KPKV…EAKA), 165-186 (AEVK…EKKK), 200-234 (KRAE…DNRR), and 291-312 (NRRD…DGNR). The tract at residues 128 to 354 (KPKVAEPVKK…NNQSSSVPAT (227 aa)) is disordered. Polar residues-rich tracts occupy residues 322–336 (NRNQ…NWNQ) and 343–353 (YQNNQSSSVPA). Residues 448 to 619 (ERPAVVTIMG…LLVAEVQELK (172 aa)) form the tr-type G domain. Residues 457 to 464 (GHVDHGKT) form a G1 region. Residue 457–464 (GHVDHGKT) coordinates GTP. Residues 482-486 (GITQH) form a G2 region. The interval 503 to 506 (DTPG) is G3. Residues 503-507 (DTPGH) and 557-560 (NKID) contribute to the GTP site. Residues 557–560 (NKID) are G4. Residues 595–597 (SAK) are G5.

It belongs to the TRAFAC class translation factor GTPase superfamily. Classic translation factor GTPase family. IF-2 subfamily.

It is found in the cytoplasm. One of the essential components for the initiation of protein synthesis. Protects formylmethionyl-tRNA from spontaneous hydrolysis and promotes its binding to the 30S ribosomal subunits. Also involved in the hydrolysis of GTP during the formation of the 70S ribosomal complex. This chain is Translation initiation factor IF-2, found in Lactococcus lactis subsp. cremoris (strain MG1363).